The sequence spans 306 residues: Ribonuclease Z (306 aa).

Histidine 63, histidine 65, aspartate 67, histidine 68, histidine 141, aspartate 211, and histidine 269 together coordinate Zn(2+). The active-site Proton acceptor is aspartate 67.

The protein belongs to the RNase Z family. Homodimer. Zn(2+) serves as cofactor.

The catalysed reaction is Endonucleolytic cleavage of RNA, removing extra 3' nucleotides from tRNA precursor, generating 3' termini of tRNAs. A 3'-hydroxy group is left at the tRNA terminus and a 5'-phosphoryl group is left at the trailer molecule.. Functionally, zinc phosphodiesterase, which displays some tRNA 3'-processing endonuclease activity. Probably involved in tRNA maturation, by removing a 3'-trailer from precursor tRNA. The protein is Ribonuclease Z of Staphylococcus aureus (strain bovine RF122 / ET3-1).